Here is a 267-residue protein sequence, read N- to C-terminus: Malonyl-[acyl-carrier protein] O-methyltransferase (267 aa).

This sequence belongs to the methyltransferase superfamily.

It carries out the reaction malonyl-[ACP] + S-adenosyl-L-methionine = malonyl-[ACP] methyl ester + S-adenosyl-L-homocysteine. It participates in cofactor biosynthesis; biotin biosynthesis. Converts the free carboxyl group of a malonyl-thioester to its methyl ester by transfer of a methyl group from S-adenosyl-L-methionine (SAM). It allows to synthesize pimeloyl-ACP via the fatty acid synthetic pathway. The chain is Malonyl-[acyl-carrier protein] O-methyltransferase from Geobacter sulfurreducens (strain ATCC 51573 / DSM 12127 / PCA).